Reading from the N-terminus, the 317-residue chain is Protein-methionine-sulfoxide reductase catalytic subunit MsrP (317 aa).

A signal peptide (tat-type signal) is located at residues 1–40 (MNKFTKTDVTPEKLFIQRRKIIQGMSVLSAAAAFPNLAAA). Residues asparagine 72, 75–76 (YE), cysteine 129, threonine 164, asparagine 216, arginine 221, and 232–234 (SIK) contribute to the Mo-molybdopterin site.

This sequence belongs to the MsrP family. Heterodimer of a catalytic subunit (MsrP) and a heme-binding subunit (MsrQ). Requires Mo-molybdopterin as cofactor. Post-translationally, predicted to be exported by the Tat system. The position of the signal peptide cleavage has not been experimentally proven.

It is found in the periplasm. The enzyme catalyses L-methionyl-[protein] + a quinone + H2O = L-methionyl-(S)-S-oxide-[protein] + a quinol. It catalyses the reaction L-methionyl-[protein] + a quinone + H2O = L-methionyl-(R)-S-oxide-[protein] + a quinol. Part of the MsrPQ system that repairs oxidized periplasmic proteins containing methionine sulfoxide residues (Met-O), using respiratory chain electrons. Thus protects these proteins from oxidative-stress damage caused by reactive species of oxygen and chlorine generated by the host defense mechanisms. MsrPQ is essential for the maintenance of envelope integrity under bleach stress, rescuing a wide series of structurally unrelated periplasmic proteins from methionine oxidation. The catalytic subunit MsrP is non-stereospecific, being able to reduce both (R-) and (S-) diastereoisomers of methionine sulfoxide. The polypeptide is Protein-methionine-sulfoxide reductase catalytic subunit MsrP (Actinobacillus succinogenes (strain ATCC 55618 / DSM 22257 / CCUG 43843 / 130Z)).